The sequence spans 97 residues: Small ribosomal subunit protein bS20c (97 aa).

Polar residues predominate over residues 1–15 (MSKNVSAIKKNQVSL). Residues 1–20 (MSKNVSAIKKNQVSLRNKRK) are disordered.

The protein belongs to the bacterial ribosomal protein bS20 family.

Its subcellular location is the plastid. The protein localises to the chloroplast. Functionally, binds directly to 16S ribosomal RNA. The polypeptide is Small ribosomal subunit protein bS20c (Gracilaria tenuistipitata var. liui (Red alga)).